A 315-amino-acid chain; its full sequence is tRNA dimethylallyltransferase (315 aa).

Position 11 to 18 (11 to 18) interacts with ATP; it reads GPTASGKS. 13 to 18 contacts substrate; the sequence is TASGKS. Interaction with substrate tRNA stretches follow at residues 36-39 and 160-164; these read DSMQ and QRLIR.

The protein belongs to the IPP transferase family. In terms of assembly, monomer. Mg(2+) serves as cofactor.

The catalysed reaction is adenosine(37) in tRNA + dimethylallyl diphosphate = N(6)-dimethylallyladenosine(37) in tRNA + diphosphate. Functionally, catalyzes the transfer of a dimethylallyl group onto the adenine at position 37 in tRNAs that read codons beginning with uridine, leading to the formation of N6-(dimethylallyl)adenosine (i(6)A). The sequence is that of tRNA dimethylallyltransferase from Rickettsia bellii (strain OSU 85-389).